A 391-amino-acid polypeptide reads, in one-letter code: uncharacterized protein (391 aa).

The region spanning 235-330 is the HTH arsR-type domain; the sequence is VFILSRINLL…LYLKNETQKS (96 aa).

This is an uncharacterized protein from Methanocaldococcus jannaschii (strain ATCC 43067 / DSM 2661 / JAL-1 / JCM 10045 / NBRC 100440) (Methanococcus jannaschii).